The chain runs to 303 residues: Elongation factor Ts (303 aa).

The interval 81–84 is involved in Mg(2+) ion dislocation from EF-Tu; it reads TDFV.

This sequence belongs to the EF-Ts family.

The protein resides in the cytoplasm. Associates with the EF-Tu.GDP complex and induces the exchange of GDP to GTP. It remains bound to the aminoacyl-tRNA.EF-Tu.GTP complex up to the GTP hydrolysis stage on the ribosome. The polypeptide is Elongation factor Ts (Mesomycoplasma hyopneumoniae (strain 7448) (Mycoplasma hyopneumoniae)).